Consider the following 254-residue polypeptide: Adenosylcobinamide-GDP ribazoletransferase (254 aa).

Helical transmembrane passes span 36-56 (YYPL…TLLL), 61-81 (PLVT…GIHL), 114-134 (ALSA…LLAL), 138-158 (LVPY…LIGV), 197-217 (WVLQ…ILLF), and 232-252 (LYGA…FPLL).

This sequence belongs to the CobS family. The cofactor is Mg(2+).

The protein localises to the cell membrane. The enzyme catalyses alpha-ribazole + adenosylcob(III)inamide-GDP = adenosylcob(III)alamin + GMP + H(+). It catalyses the reaction alpha-ribazole 5'-phosphate + adenosylcob(III)inamide-GDP = adenosylcob(III)alamin 5'-phosphate + GMP + H(+). The protein operates within cofactor biosynthesis; adenosylcobalamin biosynthesis; adenosylcobalamin from cob(II)yrinate a,c-diamide: step 7/7. Joins adenosylcobinamide-GDP and alpha-ribazole to generate adenosylcobalamin (Ado-cobalamin). Also synthesizes adenosylcobalamin 5'-phosphate from adenosylcobinamide-GDP and alpha-ribazole 5'-phosphate. The sequence is that of Adenosylcobinamide-GDP ribazoletransferase from Desulfitobacterium hafniense (strain Y51).